The primary structure comprises 766 residues: MKTPWKVLLGLLGIAALVTVITVPVVLLNKGTDDAAADSRRTYTLTDYLKSTFRVKFYTLQWISDHEYLYKQENNILLFNAEYGNSSIFLENSTFDELGYSTNDYSVSPDRQFILFEYNYVKQWRHSYTASYDIYDLNKRQLITEERIPNNTQWITWSPVGHKLAYVWNNDIYVKNEPNLSSQRITWTGKENVIYNGVTDWVYEEEVFSAYSALWWSPNGTFLAYAQFNDTEVPLIEYSFYSDESLQYPKTVRIPYPKAGAENPTVKFFVVDTRTLSPNASVTSYQIVPPASVLIGDHYLCGVTWVTEERISLQWIRRAQNYSIIDICDYDESTGRWISSVARQHIEISTTGWVGRFRPAEPHFTSDGNSFYKIISNEEGYKHICHFQTDKSNCTFITKGAWEVIGIEALTSDYLYYISNEHKGMPGGRNLYRIQLNDYTKVTCLSCELNPERCQYYSASFSNKAKYYQLRCFGPGLPLYTLHSSSSDKELRVLEDNSALDKMLQDVQMPSKKLDVINLHGTKFWYQMILPPHFDKSKKYPLLIEVYAGPCSQKVDTVFRLSWATYLASTENIIVASFDGRGSGYQGDKIMHAINRRLGTFEVEDQIEATRQFSKMGFVDDKRIAIWGWSYGGYVTSMVLGAGSGVFKCGIAVAPVSKWEYYDSVYTERYMGLPTPEDNLDYYRNSTVMSRAENFKQVEYLLIHGTADDNVHFQQSAQLSKALVDAGVDFQTMWYTDEDHGIASNMAHQHIYTHMSHFLKQCFSLP.

The Cytoplasmic segment spans residues 1–6 (MKTPWK). Residues 7–27 (VLLGLLGIAALVTVITVPVVL) form a helical; Signal-anchor for type II membrane protein membrane-spanning segment. Topologically, residues 28–766 (LNKGTDDAAA…HFLKQCFSLP (739 aa)) are extracellular. Asn-85, Asn-92, Asn-150, Asn-179, Asn-219, Asn-229, Asn-279, and Asn-321 each carry an N-linked (GlcNAc...) asparagine glycan. Disulfide bonds link Cys-385/Cys-394, Cys-444/Cys-447, and Cys-454/Cys-472. Catalysis depends on Ser-630, which acts as the Charge relay system. Cys-649 and Cys-762 are disulfide-bonded. N-linked (GlcNAc...) asparagine glycosylation is present at Asn-685. Catalysis depends on charge relay system residues Asp-708 and His-740.

The protein belongs to the peptidase S9B family. DPPIV subfamily. In terms of assembly, monomer. Homodimer. Heterodimer with Seprase (FAP). Requires homodimerization for optimal dipeptidyl peptidase activity and T-cell costimulation. Found in a membrane raft complex, at least composed of BCL10, CARD11, DPP4 and IKBKB. Associates with collagen. Interacts with PTPRC; the interaction is enhanced in an interleukin-12-dependent manner in activated lymphocytes. Interacts (via extracellular domain) with ADA; does not inhibit its dipeptidyl peptidase activity. Interacts with CAV1 (via the N-terminus); the interaction is direct. Interacts (via cytoplasmic tail) with CARD11 (via PDZ domain); its homodimerization is necessary for interaction with CARD11. Interacts with IGF2R; the interaction is direct. Interacts with GPC3. In terms of processing, the soluble form (Dipeptidyl peptidase 4 soluble form also named SDPP) derives from the membrane form (Dipeptidyl peptidase 4 membrane form also named MDPP) by proteolytic processing. Post-translationally, N- and O-Glycosylated. Phosphorylated. Mannose 6-phosphate residues in the carbohydrate moiety are necessary for interaction with IGF2R in activated T-cells. Mannose 6-phosphorylation is induced during T-cell activation.

Its subcellular location is the secreted. The protein resides in the cell membrane. It is found in the apical cell membrane. It localises to the cell projection. The protein localises to the invadopodium membrane. Its subcellular location is the lamellipodium membrane. The protein resides in the cell junction. It is found in the membrane raft. The enzyme catalyses Release of an N-terminal dipeptide, Xaa-Yaa-|-Zaa-, from a polypeptide, preferentially when Yaa is Pro, provided Zaa is neither Pro nor hydroxyproline.. With respect to regulation, inhibited by GPC3 and diprotin A. In terms of biological role, cell surface glycoprotein receptor involved in the costimulatory signal essential for T-cell receptor (TCR)-mediated T-cell activation. Acts as a positive regulator of T-cell coactivation, by binding at least ADA, CAV1, IGF2R, and PTPRC. Its binding to CAV1 and CARD11 induces T-cell proliferation and NF-kappa-B activation in a T-cell receptor/CD3-dependent manner. Its interaction with ADA also regulates lymphocyte-epithelial cell adhesion. In association with FAP is involved in the pericellular proteolysis of the extracellular matrix (ECM), the migration and invasion of endothelial cells into the ECM. May be involved in the promotion of lymphatic endothelial cells adhesion, migration and tube formation. When overexpressed, enhanced cell proliferation, a process inhibited by GPC3. Also acts as a serine exopeptidase with a dipeptidyl peptidase activity that regulates various physiological processes by cleaving peptides in the circulation, including many chemokines, mitogenic growth factors, neuropeptides and peptide hormones such as brain natriuretic peptide 32. Removes N-terminal dipeptides sequentially from polypeptides having unsubstituted N-termini provided that the penultimate residue is proline. This is Dipeptidyl peptidase 4 (DPP4) from Sus scrofa (Pig).